The following is a 614-amino-acid chain: Probable pectinesterase/pectinesterase inhibitor 13 (614 aa).

The helical transmembrane segment at I25 to A45 threads the bilayer. Residues Q55–P102 are disordered. N66, N128, N197, N243, N301, N351, and N367 each carry an N-linked (GlcNAc...) asparagine glycan. Residues G103–L255 form a pectinesterase inhibitor 13 region. Residues N301–D598 form a pectinesterase 13 region. Residues T376 and Q406 each contribute to the substrate site. The active-site Proton donor; for pectinesterase activity is the D429. A disulfide bridge connects residues C443 and C463. The active-site Nucleophile; for pectinesterase activity is the D450. Substrate-binding residues include R518 and W520. N-linked (GlcNAc...) asparagine glycosylation is found at N522 and N588.

This sequence in the N-terminal section; belongs to the PMEI family. In the C-terminal section; belongs to the pectinesterase family. Expressed in flower buds.

It is found in the membrane. The enzyme catalyses [(1-&gt;4)-alpha-D-galacturonosyl methyl ester](n) + n H2O = [(1-&gt;4)-alpha-D-galacturonosyl](n) + n methanol + n H(+). The protein operates within glycan metabolism; pectin degradation; 2-dehydro-3-deoxy-D-gluconate from pectin: step 1/5. Functionally, acts in the modification of cell walls via demethylesterification of cell wall pectin. The polypeptide is Probable pectinesterase/pectinesterase inhibitor 13 (PME13) (Arabidopsis thaliana (Mouse-ear cress)).